A 468-amino-acid polypeptide reads, in one-letter code: Sushi repeat-containing protein SRPX2 (468 aa).

Residues 1–25 (MMTSPLTQRGALSLLLLLMPAVTPT) form the signal peptide. Sushi domains follow at residues 72 to 122 (ATCY…YCRQ), 123 to 181 (IRCH…VCVD), and 265 to 324 (RRCP…VCTP). 4 disulfides stabilise this stretch: Cys-74/Cys-108, Cys-94/Cys-120, Cys-125/Cys-166, and Cys-152/Cys-179. One can recognise an HYR domain in the interval 180–264 (VDIDPPKIRC…SCKFIVKVQV (85 aa)). Cystine bridges form between Cys-267-Cys-309 and Cys-295-Cys-322.

Forms homooligomers. Interacts with PLAUR (via the UPAR/Ly6 domains), ADAMTS4 and CTSB. Interacts with HGF; the interaction increases the mitogenic activity of HGF. In terms of processing, contains chondroitin sulfate chains. As to expression, expressed in angiogenic endothelial cells (at protein level).

It localises to the secreted. The protein localises to the cytoplasm. Its subcellular location is the cell surface. The protein resides in the synapse. Acts as a ligand for the urokinase plasminogen activator surface receptor. Plays a role in angiogenesis by inducing endothelial cell migration and the formation of vascular network (cords). Involved in cellular migration and adhesion. Increases the phosphorylation levels of FAK. Interacts with and increases the mitogenic activity of HGF. Promotes synapse formation. Required for ultrasonic vocalizations. This is Sushi repeat-containing protein SRPX2 (Srpx2) from Mus musculus (Mouse).